We begin with the raw amino-acid sequence, 228 residues long: uncharacterized protein (228 aa).

The protein belongs to the HAD-like hydrolase superfamily.

It is found in the cytoplasm. The protein localises to the nucleus. This is an uncharacterized protein from Schizosaccharomyces pombe (strain 972 / ATCC 24843) (Fission yeast).